The chain runs to 846 residues: Aminopeptidase N (846 aa).

Substrate-binding positions include Glu-120 and 252–256; that span reads GAMEN. His-288 contacts Zn(2+). The Proton acceptor role is filled by Glu-289. Zn(2+) contacts are provided by His-292 and Glu-311.

This sequence belongs to the peptidase M1 family. In terms of assembly, monomer. Requires Zn(2+) as cofactor.

Its subcellular location is the cytoplasm. It carries out the reaction Release of an N-terminal amino acid, Xaa-|-Yaa- from a peptide, amide or arylamide. Xaa is preferably Ala, but may be most amino acids including Pro (slow action). When a terminal hydrophobic residue is followed by a prolyl residue, the two may be released as an intact Xaa-Pro dipeptide.. In terms of biological role, aminopeptidase with broad substrate specificity to several peptides. It has more affinity for oligopeptides than for dipeptides. It plays an essential role in the metabolism, it may be involved in nitrogen supply or protein turnover. This Lactococcus lactis subsp. lactis (strain IL1403) (Streptococcus lactis) protein is Aminopeptidase N (pepN).